Consider the following 398-residue polypeptide: Substance-K receptor (398 aa).

At 1-32 (MGTCDIVTEANISSGPESNTTGITAFSMPSWQ) the chain is on the extracellular side. N-linked (GlcNAc...) asparagine glycans are attached at residues N11 and N19. A helical transmembrane segment spans residues 33–56 (LALWATAYLALVLVAVTGNAIVIW). The Cytoplasmic portion of the chain corresponds to 57–69 (IILAHRRMRTVTN). A helical transmembrane segment spans residues 70-90 (YFIVNLALADLCMAAFNAAFN). Topologically, residues 91–107 (FVYASHNIWYFGRAFCY) are extracellular. A disulfide bridge connects residues C106 and C181. The chain crosses the membrane as a helical span at residues 108-129 (FQNLFPITAMFVSIYSMTAIAA). Residues 130–149 (DRYMAIVHPFQPRLSAPSTK) lie on the Cytoplasmic side of the membrane. The helical transmembrane segment at 150–170 (AVIAGIWLVALALASPQCFYS) threads the bilayer. Topologically, residues 171 to 196 (TVTMDQGATKCVVAWPEDSGGKTLLL) are extracellular. Residues 197 to 218 (YHLVVIALIYFLPLAVMFVAYS) form a helical membrane-spanning segment. Over 219 to 251 (VIGLTLWRRAVPGHQAHGANLRHLQAMKKFVKT) the chain is Cytoplasmic. Residues 252 to 272 (MVLVVLTFAICWLPYHLYFIL) form a helical membrane-spanning segment. Residues 273–290 (GSFQEDIYCHKFIQQVYL) are Extracellular-facing. Residues 291–310 (ALFWLAMSSTMYNPIIYCCL) form a helical membrane-spanning segment. At 311-398 (NHRFRSGFRL…LAPTKTHVEI (88 aa)) the chain is on the cytoplasmic side. C324 carries S-palmitoyl cysteine lipidation.

This sequence belongs to the G-protein coupled receptor 1 family.

The protein localises to the cell membrane. Functionally, this is a receptor for the tachykinin neuropeptide substance K (neurokinin A). It is associated with G proteins that activate a phosphatidylinositol-calcium second messenger system. The rank order of affinity of this receptor to tachykinins is: substance K &gt; neuromedin-K &gt; substance P. The sequence is that of Substance-K receptor (TACR2) from Homo sapiens (Human).